The following is a 130-amino-acid chain: Ribonuclease P protein component 2 (130 aa).

This sequence belongs to the eukaryotic/archaeal RNase P protein component 2 family. Consists of a catalytic RNA component and at least 5 protein subunits.

Its subcellular location is the cytoplasm. It carries out the reaction Endonucleolytic cleavage of RNA, removing 5'-extranucleotides from tRNA precursor.. In terms of biological role, part of ribonuclease P, a protein complex that generates mature tRNA molecules by cleaving their 5'-ends. The chain is Ribonuclease P protein component 2 from Methanococcus maripaludis (strain DSM 14266 / JCM 13030 / NBRC 101832 / S2 / LL).